An 86-amino-acid polypeptide reads, in one-letter code: RQC P-site tRNA stabilizing factor (86 aa).

The S4 RNA-binding domain maps to 1–62 (MRLDKFLKVS…QKLVTVQVNE (62 aa)).

It belongs to the RqcP family. In terms of assembly, associates with stalled 50S ribosomal subunits. Binds to RqcH, 23S rRNA and the P-site tRNA. Does not require RqcH for association with 50S subunits. Crystallized 50S subunits are variously associated with an A/P-site tRNA with or without RqcH, as well as with P- and E-site tRNAs but no RqcH. Displaced from the 50S subunit by puromycin but not thiostrepton.

Key component of the ribosome quality control system (RQC), a ribosome-associated complex that mediates the extraction of incompletely synthesized nascent chains from stalled ribosomes and their subsequent degradation. RqcH recruits Ala-charged tRNA, and with RqcP directs the elongation of stalled nascent chains on 50S ribosomal subunits, leading to non-templated C-terminal alanine extensions (Ala tail). The Ala tail promotes nascent chain degradation. RqcP is associated with the translocation-like movement of the peptidyl-tRNA from the A-site into the P-site. RqcH, RqcP and charged tRNA(Ala) are necessary and sufficient to add an Ala tail to a model stalled nascent peptide; does not add Val. The chain is RQC P-site tRNA stabilizing factor from Bacillus subtilis (strain 168).